We begin with the raw amino-acid sequence, 143 residues long: Large ribosomal subunit protein uL11 (143 aa).

The protein belongs to the universal ribosomal protein uL11 family. As to quaternary structure, part of the ribosomal stalk of the 50S ribosomal subunit. Interacts with L10 and the large rRNA to form the base of the stalk. L10 forms an elongated spine to which L12 dimers bind in a sequential fashion forming a multimeric L10(L12)X complex. In terms of processing, one or more lysine residues are methylated.

Forms part of the ribosomal stalk which helps the ribosome interact with GTP-bound translation factors. The polypeptide is Large ribosomal subunit protein uL11 (Paenarthrobacter aurescens (strain TC1)).